The primary structure comprises 467 residues: tRNA-2-methylthio-N(6)-dimethylallyladenosine synthase (467 aa).

One can recognise an MTTase N-terminal domain in the interval 2 to 118 (PSVFIKTFGC…VAEIADNLLK (117 aa)). Residues cysteine 11, cysteine 47, cysteine 81, cysteine 159, cysteine 163, and cysteine 166 each contribute to the [4Fe-4S] cluster site. The region spanning 145-379 (TKAQPIAYVS…LEIQNKITME (235 aa)) is the Radical SAM core domain. Positions 382–445 (QKWVGQVVEI…GHTFYGTPLI (64 aa)) constitute a TRAM domain.

The protein belongs to the methylthiotransferase family. MiaB subfamily. Monomer. The cofactor is [4Fe-4S] cluster.

It localises to the cytoplasm. It catalyses the reaction N(6)-dimethylallyladenosine(37) in tRNA + (sulfur carrier)-SH + AH2 + 2 S-adenosyl-L-methionine = 2-methylsulfanyl-N(6)-dimethylallyladenosine(37) in tRNA + (sulfur carrier)-H + 5'-deoxyadenosine + L-methionine + A + S-adenosyl-L-homocysteine + 2 H(+). Functionally, catalyzes the methylthiolation of N6-(dimethylallyl)adenosine (i(6)A), leading to the formation of 2-methylthio-N6-(dimethylallyl)adenosine (ms(2)i(6)A) at position 37 in tRNAs that read codons beginning with uridine. This is tRNA-2-methylthio-N(6)-dimethylallyladenosine synthase from Methylacidiphilum infernorum (isolate V4) (Methylokorus infernorum (strain V4)).